The sequence spans 158 residues: Large ribosomal subunit protein uL11 (158 aa).

Belongs to the universal ribosomal protein uL11 family. As to quaternary structure, part of the ribosomal stalk of the 50S ribosomal subunit. Interacts with L10 and the large rRNA to form the base of the stalk. L10 forms an elongated spine to which L12 dimers bind in a sequential fashion forming a multimeric L10(L12)X complex.

Forms part of the ribosomal stalk which helps the ribosome interact with GTP-bound translation factors. This chain is Large ribosomal subunit protein uL11, found in Methanosphaerula palustris (strain ATCC BAA-1556 / DSM 19958 / E1-9c).